Consider the following 307-residue polypeptide: 4-hydroxythreonine-4-phosphate dehydrogenase (307 aa).

Substrate-binding residues include His-126 and Thr-127. The a divalent metal cation site is built by His-156, His-195, and His-251. Lys-259, Asn-268, and Arg-277 together coordinate substrate.

It belongs to the PdxA family. Homodimer. It depends on Zn(2+) as a cofactor. The cofactor is Mg(2+). Co(2+) is required as a cofactor.

It is found in the cytoplasm. The catalysed reaction is 4-(phosphooxy)-L-threonine + NAD(+) = 3-amino-2-oxopropyl phosphate + CO2 + NADH. It functions in the pathway cofactor biosynthesis; pyridoxine 5'-phosphate biosynthesis; pyridoxine 5'-phosphate from D-erythrose 4-phosphate: step 4/5. Its function is as follows. Catalyzes the NAD(P)-dependent oxidation of 4-(phosphooxy)-L-threonine (HTP) into 2-amino-3-oxo-4-(phosphooxy)butyric acid which spontaneously decarboxylates to form 3-amino-2-oxopropyl phosphate (AHAP). The chain is 4-hydroxythreonine-4-phosphate dehydrogenase from Helicobacter pylori (strain Shi470).